A 235-amino-acid polypeptide reads, in one-letter code: Caffeoyl-CoA O-methyltransferase (235 aa).

Position 8 (K8) interacts with substrate. S-adenosyl-L-methionine is bound by residues V52, E74, 76 to 77, S82, D100, and A129; that span reads GV. A substrate-binding site is contributed by D151. Residue D151 coordinates a divalent metal cation. An S-adenosyl-L-methionine-binding site is contributed by D153. D177 and N178 together coordinate a divalent metal cation.

Belongs to the class I-like SAM-binding methyltransferase superfamily. Cation-dependent O-methyltransferase family. CCoAMT subfamily. Requires a divalent metal cation as cofactor.

It carries out the reaction (E)-caffeoyl-CoA + S-adenosyl-L-methionine = (E)-feruloyl-CoA + S-adenosyl-L-homocysteine + H(+). Its pathway is aromatic compound metabolism; phenylpropanoid biosynthesis. In terms of biological role, methylates caffeoyl-CoA to feruloyl-CoA and 5-hydroxyferuloyl-CoA to sinapoyl-CoA. Plays a role in the synthesis of feruloylated polysaccharides. Involved in the reinforcement of the plant cell wall. Also involved in the responding to wounding or pathogen challenge by the increased formation of cell wall-bound ferulic acid polymers. This chain is Caffeoyl-CoA O-methyltransferase, found in Populus kitakamiensis (Aspen).